Reading from the N-terminus, the 189-residue chain is Ribosome hibernation promotion factor (189 aa).

The protein belongs to the HPF/YfiA ribosome-associated protein family. Long HPF subfamily. As to quaternary structure, interacts with 100S ribosomes.

It localises to the cytoplasm. Required for dimerization of active 70S ribosomes into 100S ribosomes in stationary phase; 100S ribosomes are translationally inactive and sometimes present during exponential growth. The protein is Ribosome hibernation promotion factor of Staphylococcus epidermidis (strain ATCC 35984 / DSM 28319 / BCRC 17069 / CCUG 31568 / BM 3577 / RP62A).